The sequence spans 652 residues: Acetyl-coenzyme A synthetase (652 aa).

Residues 189-192 (RGGK) and Ser-311 each bind CoA. Residues 387 to 389 (GEP), 411 to 416 (DTWWQT), Asp-500, and Arg-515 contribute to the ATP site. Ser-523 is a binding site for CoA. An ATP-binding site is contributed by Arg-526. Mg(2+) contacts are provided by Val-537, His-539, and Ile-542. Lys-584 lines the CoA pocket. Lys-609 is modified (N6-acetyllysine).

It belongs to the ATP-dependent AMP-binding enzyme family. Mg(2+) serves as cofactor. Acetylated. Deacetylation by the SIR2-homolog deacetylase activates the enzyme.

The catalysed reaction is acetate + ATP + CoA = acetyl-CoA + AMP + diphosphate. In terms of biological role, catalyzes the conversion of acetate into acetyl-CoA (AcCoA), an essential intermediate at the junction of anabolic and catabolic pathways. AcsA undergoes a two-step reaction. In the first half reaction, AcsA combines acetate with ATP to form acetyl-adenylate (AcAMP) intermediate. In the second half reaction, it can then transfer the acetyl group from AcAMP to the sulfhydryl group of CoA, forming the product AcCoA. This is Acetyl-coenzyme A synthetase from Bartonella quintana (strain Toulouse) (Rochalimaea quintana).